A 165-amino-acid polypeptide reads, in one-letter code: uncharacterized protein (165 aa).

A Macro domain is found at 1–165; that stretch reads MDIKVVKGSI…EAWEKVLGLR (165 aa).

This is an uncharacterized protein from Aquifex aeolicus (strain VF5).